Consider the following 614-residue polypeptide: Bifunctional enzyme CysN/CysC (614 aa).

Residues 1 to 441 (MTTLLRLATA…SLVTAQDRPP (441 aa)) are sulfate adenylyltransferase. The tr-type G domain maps to 2 to 217 (TTLLRLATAG…DVYIAGDRNM (216 aa)). The segment at 11–18 (GSVDDGKS) is G1. A GTP-binding site is contributed by 11-18 (GSVDDGKS). Residues 67 to 71 (GITID) are G2. A G3 region spans residues 88-91 (DTPG). GTP-binding positions include 88–92 (DTPGH) and 143–146 (NKMD). Residues 143-146 (NKMD) are G4. A G5 region spans residues 180 to 182 (SAL). Positions 442 to 614 (RGKTVWFTGL…EVIDLLESSS (173 aa)) are adenylyl-sulfate kinase. Position 450 to 457 (450 to 457 (GLSGSGKS)) interacts with ATP. Ser-524 (phosphoserine intermediate) is an active-site residue. The tract at residues 578–597 (GIDSPYQRPKNPDLRLTPDR) is disordered. Basic and acidic residues predominate over residues 587 to 597 (KNPDLRLTPDR).

In the C-terminal section; belongs to the APS kinase family. This sequence in the N-terminal section; belongs to the TRAFAC class translation factor GTPase superfamily. Classic translation factor GTPase family. CysN/NodQ subfamily. Heterodimer composed of CysD, the smaller subunit, and CysNC.

The enzyme catalyses sulfate + ATP + H(+) = adenosine 5'-phosphosulfate + diphosphate. It catalyses the reaction adenosine 5'-phosphosulfate + ATP = 3'-phosphoadenylyl sulfate + ADP + H(+). The protein operates within sulfur metabolism; hydrogen sulfide biosynthesis; sulfite from sulfate: step 1/3. It participates in sulfur metabolism; hydrogen sulfide biosynthesis; sulfite from sulfate: step 2/3. In terms of biological role, with CysD forms the ATP sulfurylase (ATPS) that catalyzes the adenylation of sulfate producing adenosine 5'-phosphosulfate (APS) and diphosphate, the first enzymatic step in sulfur assimilation pathway. APS synthesis involves the formation of a high-energy phosphoric-sulfuric acid anhydride bond driven by GTP hydrolysis by CysN coupled to ATP hydrolysis by CysD. Its function is as follows. APS kinase catalyzes the synthesis of activated sulfate. The sequence is that of Bifunctional enzyme CysN/CysC (cysNC) from Mycobacterium tuberculosis (strain CDC 1551 / Oshkosh).